The chain runs to 156 residues: ATP synthase subunit b (156 aa).

A helical transmembrane segment spans residues 7 to 27 (LFAQLVVFFILAWFTMKFVWP).

The protein belongs to the ATPase B chain family. In terms of assembly, F-type ATPases have 2 components, F(1) - the catalytic core - and F(0) - the membrane proton channel. F(1) has five subunits: alpha(3), beta(3), gamma(1), delta(1), epsilon(1). F(0) has four main subunits: a(1), b(2) and c(10-14). The alpha and beta chains form an alternating ring which encloses part of the gamma chain. F(1) is attached to F(0) by a central stalk formed by the gamma and epsilon chains, while a peripheral stalk is formed by the delta and b chains.

The protein resides in the cell inner membrane. Its function is as follows. F(1)F(0) ATP synthase produces ATP from ADP in the presence of a proton or sodium gradient. F-type ATPases consist of two structural domains, F(1) containing the extramembraneous catalytic core and F(0) containing the membrane proton channel, linked together by a central stalk and a peripheral stalk. During catalysis, ATP synthesis in the catalytic domain of F(1) is coupled via a rotary mechanism of the central stalk subunits to proton translocation. Functionally, component of the F(0) channel, it forms part of the peripheral stalk, linking F(1) to F(0). In Methylibium petroleiphilum (strain ATCC BAA-1232 / LMG 22953 / PM1), this protein is ATP synthase subunit b.